Consider the following 158-residue polypeptide: MTNAFTHINADGNAHMVDVTDKSVTEREARAEAYIEMASDTLEMIMSGSHHKGDVFATARIAGIQAAKKTSDLIPLCHPLMLTKVEVELEAQPEHNRVWIRSLCKLSGKTGVEMEALTAASTAALTIYDMCKAVQKDMVISQVRLLEKRGGKSGHFKV.

Substrate-binding positions include 76–78 and 114–115; these read LCH and ME. The active site involves Asp-129.

This sequence belongs to the MoaC family. Homohexamer; trimer of dimers.

The enzyme catalyses (8S)-3',8-cyclo-7,8-dihydroguanosine 5'-triphosphate = cyclic pyranopterin phosphate + diphosphate. Its pathway is cofactor biosynthesis; molybdopterin biosynthesis. Its function is as follows. Catalyzes the conversion of (8S)-3',8-cyclo-7,8-dihydroguanosine 5'-triphosphate to cyclic pyranopterin monophosphate (cPMP). This is Cyclic pyranopterin monophosphate synthase from Shewanella piezotolerans (strain WP3 / JCM 13877).